The sequence spans 297 residues: Homeobox protein HMX3 (297 aa).

Disordered regions lie at residues 24–43 (NSDS…KAGL) and 96–172 (AAQK…RKKK). 2 stretches are compositionally biased toward basic and acidic residues: residues 109–123 (TDRD…SDPD) and 145–166 (EDGK…ADKK). Positions 170–229 (KKKTRTVFSRSQVFQLESTFDMKRYLSSSERAGLAASLHLTETQVKIWFQNRRNKWKRQL) form a DNA-binding region, homeobox.

This sequence belongs to the HMX homeobox family. As to expression, expressed in the ear placode and vesicle and in cells forming the vestibulo-acoustic ganglion. Also expressed in the lateral line.

The protein localises to the nucleus. Functionally, transcription factor involved in specification of neuronal cell types and which is required for inner ear and hypothalamus development. Binds to the 5'-CAAGTG-3' core sequence. The polypeptide is Homeobox protein HMX3 (hmx3) (Danio rerio (Zebrafish)).